We begin with the raw amino-acid sequence, 88 residues long: Apolipoprotein C-I (88 aa).

The signal sequence occupies residues 1–26 (MRLFLSLPVLVVVLAMVWEGPAPTQA).

The protein belongs to the apolipoprotein C1 family.

It localises to the secreted. In terms of biological role, inhibitor of lipoprotein binding to the low density lipoprotein (LDL) receptor, LDL receptor-related protein, and very low density lipoprotein (VLDL) receptor. Associates with high density lipoproteins (HDL) and the triacylglycerol-rich lipoproteins in the plasma and makes up about 10% of the protein of the VLDL and 2% of that of HDL. Appears to interfere directly with fatty acid uptake and is also the major plasma inhibitor of cholesteryl ester transfer protein (CETP). Binds free fatty acids and reduces their intracellular esterification. Modulates the interaction of APOE with beta-migrating VLDL and inhibits binding of beta-VLDL to the LDL receptor-related protein. The protein is Apolipoprotein C-I (APOC1) of Neomonachus schauinslandi (Hawaiian monk seal).